A 570-amino-acid chain; its full sequence is Proline--tRNA ligase (570 aa).

It belongs to the class-II aminoacyl-tRNA synthetase family. ProS type 1 subfamily. Homodimer.

The protein resides in the cytoplasm. It carries out the reaction tRNA(Pro) + L-proline + ATP = L-prolyl-tRNA(Pro) + AMP + diphosphate. Catalyzes the attachment of proline to tRNA(Pro) in a two-step reaction: proline is first activated by ATP to form Pro-AMP and then transferred to the acceptor end of tRNA(Pro). As ProRS can inadvertently accommodate and process non-cognate amino acids such as alanine and cysteine, to avoid such errors it has two additional distinct editing activities against alanine. One activity is designated as 'pretransfer' editing and involves the tRNA(Pro)-independent hydrolysis of activated Ala-AMP. The other activity is designated 'posttransfer' editing and involves deacylation of mischarged Ala-tRNA(Pro). The misacylated Cys-tRNA(Pro) is not edited by ProRS. The sequence is that of Proline--tRNA ligase from Shewanella oneidensis (strain ATCC 700550 / JCM 31522 / CIP 106686 / LMG 19005 / NCIMB 14063 / MR-1).